Here is a 513-residue protein sequence, read N- to C-terminus: OTU domain-containing protein 5-A (513 aa).

Disordered stretches follow at residues 1–75 (MTIL…GGAG) and 99–136 (GPGH…DEYE). Residues 166–289 (FIIKQMKEDG…NIHYNSVVNP (124 aa)) form the OTU domain. The tract at residues 171–177 (MKEDGAC) is cys-loop. Asp-174 is a catalytic residue. Residue Cys-177 is the Nucleophile of the active site. Residues 226–236 (KRKNNCHGNHI) are variable-loop. Residues 277–282 (YHRNIH) are his-loop. Residue His-282 is part of the active site. The segment at 387–446 (LEEWSGRSPRQRSTAGSPEHPDLHAELCMKPPSPGAPLILGKPPSPCAPGPSNQMSTGAD) is disordered.

Belongs to the peptidase C85 family.

It catalyses the reaction Thiol-dependent hydrolysis of ester, thioester, amide, peptide and isopeptide bonds formed by the C-terminal Gly of ubiquitin (a 76-residue protein attached to proteins as an intracellular targeting signal).. Deubiquitinating enzyme that may function as negative regulator of the innate immune system. Has peptidase activity towards 'Lys-48'- and 'Lys-63'-linked polyubiquitin chains. Can also cleave 'Lys-11'-linked ubiquitin chains (in vitro). In Xenopus laevis (African clawed frog), this protein is OTU domain-containing protein 5-A (otud5-a).